Here is a 338-residue protein sequence, read N- to C-terminus: D-erythrose-4-phosphate dehydrogenase (338 aa).

NAD(+) is bound at residue 11-12; sequence RI. Substrate contacts are provided by residues 153–155, Arg-199, 212–213, and Arg-235; these read SCT and TK. Cys-154 serves as the catalytic Nucleophile. Residue Asn-317 coordinates NAD(+).

Belongs to the glyceraldehyde-3-phosphate dehydrogenase family. Epd subfamily. In terms of assembly, homotetramer.

It is found in the cytoplasm. The enzyme catalyses D-erythrose 4-phosphate + NAD(+) + H2O = 4-phospho-D-erythronate + NADH + 2 H(+). It participates in cofactor biosynthesis; pyridoxine 5'-phosphate biosynthesis; pyridoxine 5'-phosphate from D-erythrose 4-phosphate: step 1/5. Catalyzes the NAD-dependent conversion of D-erythrose 4-phosphate to 4-phosphoerythronate. In Shewanella baltica (strain OS223), this protein is D-erythrose-4-phosphate dehydrogenase.